Reading from the N-terminus, the 78-residue chain is uncharacterized protein (78 aa).

Residues 1-28 are disordered; that stretch reads MGGGNAQKSAMARAKNLEKAKAAGKGSQ.

This is an uncharacterized protein from Arabidopsis thaliana (Mouse-ear cress).